A 758-amino-acid polypeptide reads, in one-letter code: 5-methyltetrahydropteroyltriglutamate--homocysteine methyltransferase (758 aa).

5-methyltetrahydropteroyltri-L-glutamate is bound by residues 17 to 20 (RELK) and lysine 117. L-homocysteine-binding positions include 434–436 (IGS) and glutamate 487. L-methionine is bound by residues 434-436 (IGS) and glutamate 487. 5-methyltetrahydropteroyltri-L-glutamate is bound by residues 518–519 (RC) and tryptophan 564. Aspartate 602 contacts L-homocysteine. Aspartate 602 serves as a coordination point for L-methionine. Glutamate 608 contacts 5-methyltetrahydropteroyltri-L-glutamate. Residues histidine 644, cysteine 646, and glutamate 668 each contribute to the Zn(2+) site. Histidine 697 functions as the Proton donor in the catalytic mechanism. Zn(2+) is bound at residue cysteine 729.

It belongs to the vitamin-B12 independent methionine synthase family. Requires Zn(2+) as cofactor.

The catalysed reaction is 5-methyltetrahydropteroyltri-L-glutamate + L-homocysteine = tetrahydropteroyltri-L-glutamate + L-methionine. Its pathway is amino-acid biosynthesis; L-methionine biosynthesis via de novo pathway; L-methionine from L-homocysteine (MetE route): step 1/1. Its function is as follows. Catalyzes the transfer of a methyl group from 5-methyltetrahydrofolate to homocysteine resulting in methionine formation. This chain is 5-methyltetrahydropteroyltriglutamate--homocysteine methyltransferase, found in Serratia proteamaculans (strain 568).